The primary structure comprises 256 residues: Protein YIPF5 (256 aa).

Over Met-1–Asp-125 the chain is Cytoplasmic. The chain crosses the membrane as a helical span at residues Leu-126 to Ile-146. Residue Gln-147 is a topological domain, lumenal. Residues Phe-148–Leu-168 traverse the membrane as a helical segment. Residues Met-169–Thr-172 lie on the Cytoplasmic side of the membrane. A helical transmembrane segment spans residues Gly-173–Leu-193. Residues Ser-194–Thr-195 are Lumenal-facing. Residues Phe-196–Gly-216 form a helical membrane-spanning segment. The Cytoplasmic portion of the chain corresponds to Trp-217–Gln-235. Residues Gln-236–Phe-256 traverse the membrane as a helical segment.

The protein belongs to the YIP1 family.

The protein resides in the endoplasmic reticulum membrane. It is found in the golgi apparatus. Its subcellular location is the cis-Golgi network membrane. In terms of biological role, plays a role in transport between endoplasmic reticulum and Golgi. The sequence is that of Protein YIPF5 (yipf5) from Xenopus laevis (African clawed frog).